A 2798-amino-acid chain; its full sequence is Nipped-B-like protein (2798 aa).

Composition is skewed to polar residues over residues 128–173 and 191–208; these read LSQN…QNSP and HPSSYTTHPQMQQASVSS. A disordered region spans residues 128 to 338; the sequence is LSQNSMHSSP…IKLGKDEKDQ (211 aa). A phosphoserine mark is found at Ser-150 and Ser-162. Positions 234–249 are enriched in basic and acidic residues; that stretch reads HHADNPRHGSSDDYLH. Phosphoserine occurs at positions 243, 256, 274, 280, 284, 301, 306, 318, and 350. Residues 482 to 500 are compositionally biased toward basic and acidic residues; it reads RESAIERERFSKEVQDKDK. The segment at 482–940 is disordered; sequence RESAIERERF…NKAEFPSYLL (459 aa). Positions 523-534 are enriched in polar residues; that stretch reads PASQETGSTGNG. Basic and acidic residues-rich tracts occupy residues 562-572, 593-625, 634-663, 672-685, and 694-899; these read DSIKKPEETKQ, PENHPETPKKKSDPELSKSEMKQNESRLSESKP, KSNESKLETKTETPTEELKQNENKTTESKQ, KQNENRPCDTKPND, and ENTK…DTNK. 2 positions are modified to phosphothreonine: Thr-713 and Thr-746. Ser-906 is subject to Phosphoserine. A compositionally biased stretch (basic and acidic residues) spans 908 to 933; the sequence is NSKDDKRTEGNRSKVDSNKAHTDNKA. The PxVxL motif motif lies at 990-1003; the sequence is NKGAKPVVVLQKLS. Disordered stretches follow at residues 1011–1041 and 1054–1186; these read IKDREEKSRSSLKSIKNKPSKSNKGSIDQSV and ESTM…TPEE. An N6-acetyllysine modification is found at Lys-1076. 3 positions are modified to phosphoserine: Ser-1083, Ser-1084, and Ser-1090. Acidic residues predominate over residues 1083 to 1094; that stretch reads SSDEDNDSDEAF. Basic and acidic residues predominate over residues 1103–1133; it reads KDDDKAWEYEERDRRSSGDHRRSGHSHDGRR. A phosphoserine mark is found at Ser-1144, Ser-1146, and Ser-1148. Residue Tyr-1153 is modified to Phosphotyrosine. Residue Ser-1154 is modified to Phosphoserine. Over residues 1165–1176 the composition is skewed to basic residues; that stretch reads KMKKKEKQKKRK. Phosphothreonine is present on Thr-1183. At Ser-1191 the chain carries Phosphoserine. The span at 1685–1705 shows a compositional bias: basic and acidic residues; it reads AMKSQKDEESSDATHHAKELE. The interval 1685–1706 is disordered; sequence AMKSQKDEESSDATHHAKELET. HEAT repeat units follow at residues 1761 to 1799, 1837 to 1875, 1939 to 1978, 2221 to 2261, and 2307 to 2345; these read AQSFDIYLTQILRVLGENAIAVRTKAMKCLSEVVAVDPS, PQLAEQYYDMLIERILDTGISVRKRVIKILRDICIEQPT, YDWFEQLLQNLLKSEEDSSYKPVKKACTQLVDNLVEHILK, VNLK…LKEM, and LIHPVQCVPYLIAMGTDPEPAMRNKADQQLVEIDKKYAG. The segment covering 2467–2483 has biased composition (basic and acidic residues); the sequence is VKDKRKERKTSPAKENE. 2 disordered regions span residues 2467-2514 and 2645-2690; these read VKDK…DDIN and TSLL…DSTE. Phosphoserine is present on residues Ser-2487, Ser-2503, Ser-2505, Ser-2507, Ser-2509, Ser-2646, and Ser-2652. Over residues 2504–2513 the composition is skewed to acidic residues; the sequence is ESDSDSEDDI. A Phosphothreonine modification is found at Thr-2661. Ser-2666 bears the Phosphoserine mark.

This sequence belongs to the SCC2/Nipped-B family. In terms of assembly, heterodimerizes with MAU2/SCC4 to form the cohesin loading complex. The NIPBL-MAU2 heterodimer interacts with the cohesin complex composed of SMC1A/B and SMC3 heterodimer, RAD21 and STAG1/SA1. NIPBL directly contacts all members of the complex, RAD21, SMC1A/B, SMC3 and STAG1. Interacts directly (via PxVxL motif) with CBX3 and CBX5. Interacts with ZNF609 (via N-terminus). Interacts with the multiprotein complex Integrator. Interacts with BRD4. As to expression, spermatocytes and oocytes (at protein level).

It is found in the nucleus. Its subcellular location is the chromosome. Plays an important role in the loading of the cohesin complex on to DNA. Forms a heterodimeric complex (also known as cohesin loading complex) with MAU2/SCC4 which mediates the loading of the cohesin complex onto chromatin. Plays a role in cohesin loading at sites of DNA damage. Its recruitment to double-strand breaks (DSBs) sites occurs in a CBX3-, RNF8- and RNF168-dependent manner whereas its recruitment to UV irradiation-induced DNA damage sites occurs in a ATM-, ATR-, RNF8- and RNF168-dependent manner. Along with ZNF609, promotes cortical neuron migration during brain development by regulating the transcription of crucial genes in this process. Preferentially binds promoters containing paused RNA polymerase II. Up-regulates the expression of SEMA3A, NRP1, PLXND1 and GABBR2 genes, among others. The sequence is that of Nipped-B-like protein (Nipbl) from Mus musculus (Mouse).